A 157-amino-acid polypeptide reads, in one-letter code: Endoribonuclease YbeY (157 aa).

Residues His-116, His-120, and His-126 each contribute to the Zn(2+) site.

Belongs to the endoribonuclease YbeY family. It depends on Zn(2+) as a cofactor.

It localises to the cytoplasm. Its function is as follows. Single strand-specific metallo-endoribonuclease involved in late-stage 70S ribosome quality control and in maturation of the 3' terminus of the 16S rRNA. The chain is Endoribonuclease YbeY from Pseudarthrobacter chlorophenolicus (strain ATCC 700700 / DSM 12829 / CIP 107037 / JCM 12360 / KCTC 9906 / NCIMB 13794 / A6) (Arthrobacter chlorophenolicus).